The sequence spans 139 residues: Small ribosomal subunit protein uS19 (139 aa).

It belongs to the universal ribosomal protein uS19 family.

In terms of biological role, protein S19 forms a complex with S13 that binds strongly to the 16S ribosomal RNA. The sequence is that of Small ribosomal subunit protein uS19 from Methanoregula boonei (strain DSM 21154 / JCM 14090 / 6A8).